A 184-amino-acid chain; its full sequence is Shikimate kinase (184 aa).

Residue 20 to 25 (GVGKSR) participates in ATP binding. Ser-24 is a binding site for Mg(2+). The substrate site is built by Asp-42, Arg-66, and Gly-88. Arg-127 is an ATP binding site. Arg-146 is a binding site for substrate. Arg-162 provides a ligand contact to ATP.

Belongs to the shikimate kinase family. Monomer. It depends on Mg(2+) as a cofactor.

It localises to the cytoplasm. It carries out the reaction shikimate + ATP = 3-phosphoshikimate + ADP + H(+). It functions in the pathway metabolic intermediate biosynthesis; chorismate biosynthesis; chorismate from D-erythrose 4-phosphate and phosphoenolpyruvate: step 5/7. Catalyzes the specific phosphorylation of the 3-hydroxyl group of shikimic acid using ATP as a cosubstrate. This is Shikimate kinase from Thermus thermophilus (strain ATCC BAA-163 / DSM 7039 / HB27).